The chain runs to 43 residues: Bacteriocin weissellin-A (43 aa).

A disulfide bridge links cysteine 9 with cysteine 14.

Its subcellular location is the secreted. Functionally, highly active against Gram-positive bacteria M.flavus strain ATCC 400, M.luteus strain CECT241, C.soprogenes strain NCTC533, L.monocytogenes strain ATCC 19111, L.inocua strain ATCC BAA-680D and S.carnosus strain LMG13564. Less active against B.cereus strain LMG13569, C.thiaminolyticum strain ATCC 15579, E.faecalis strain NCTC8176, L.lactis strain LM0230, L.casei strain ATCC 344, L.lactis strain IL1403, L.jensenii strain ATCC 25258, L.plantarum strain CECT220, L.brevis strain ATCC 8287, L.bulgaricus strain LMG13551, P.acidilactici strain ATCC 25740, P.pentosaceus strain ATCC 33316 and P.pentosaceus strain LMG13560. Weakly active against L.mesenteroides strain ATCC 19254, L.lactis strain ATCC 1454, L.sakei strain CECT906T, L.lactis subsp. cremoris strain MC1363 and L.curvatus strain ATCC 51436. Not active against Gram-negative bacterium S.enteritidis strain ATCC 13076. The mode of action appears to be non-lytic. Inactivated by proteinase K, but insensitive to trypsin, alpha-chymotrypsin, pepsin and papain. The chain is Bacteriocin weissellin-A from Weissella paramesenteroides (Leuconostoc paramesenteroides).